The primary structure comprises 125 residues: uncharacterized protein (125 aa).

The next 2 helical transmembrane spans lie at 28–48 (VFITHLFFLLHSLLLFLSQFC) and 54–74 (FFLPTINLVTHSIKFITLFFF).

The protein resides in the membrane. This is an uncharacterized protein from Saccharomyces cerevisiae (strain ATCC 204508 / S288c) (Baker's yeast).